The chain runs to 221 residues: Flagellar L-ring protein 2 (221 aa).

A signal peptide spans Met-1–Gly-16. The N-palmitoyl cysteine moiety is linked to residue Cys-17. Cys-17 carries the S-diacylglycerol cysteine lipid modification.

The protein belongs to the FlgH family. As to quaternary structure, the basal body constitutes a major portion of the flagellar organelle and consists of four rings (L,P,S, and M) mounted on a central rod.

It localises to the cell outer membrane. It is found in the bacterial flagellum basal body. Its function is as follows. Assembles around the rod to form the L-ring and probably protects the motor/basal body from shearing forces during rotation. This Yersinia pseudotuberculosis serotype I (strain IP32953) protein is Flagellar L-ring protein 2.